A 370-amino-acid chain; its full sequence is Histidinol-phosphate aminotransferase 1 (370 aa).

Residue K222 is modified to N6-(pyridoxal phosphate)lysine.

The protein belongs to the class-II pyridoxal-phosphate-dependent aminotransferase family. Histidinol-phosphate aminotransferase subfamily. As to quaternary structure, homodimer. It depends on pyridoxal 5'-phosphate as a cofactor.

The catalysed reaction is L-histidinol phosphate + 2-oxoglutarate = 3-(imidazol-4-yl)-2-oxopropyl phosphate + L-glutamate. Its pathway is amino-acid biosynthesis; L-histidine biosynthesis; L-histidine from 5-phospho-alpha-D-ribose 1-diphosphate: step 7/9. The polypeptide is Histidinol-phosphate aminotransferase 1 (hisC1) (Bacillus anthracis).